The sequence spans 37 residues: GVPCKCGSKKGVYWFGQITGCPGGHGYKGSCNYLLGK.

The cysteines at positions 6 and 31 are disulfide-linked.

Its subcellular location is the secreted. The protein resides in the nematocyst. In Bunodosoma cangicum (Sea anemone), this protein is Toxin Bcg III 28.78.